Consider the following 177-residue polypeptide: Large ribosomal subunit protein uL6 (177 aa).

It belongs to the universal ribosomal protein uL6 family. Part of the 50S ribosomal subunit.

Functionally, this protein binds to the 23S rRNA, and is important in its secondary structure. It is located near the subunit interface in the base of the L7/L12 stalk, and near the tRNA binding site of the peptidyltransferase center. The sequence is that of Large ribosomal subunit protein uL6 from Ruegeria pomeroyi (strain ATCC 700808 / DSM 15171 / DSS-3) (Silicibacter pomeroyi).